We begin with the raw amino-acid sequence, 277 residues long: Ribosomal RNA small subunit methyltransferase A (277 aa).

His15, Leu17, Gly42, Glu64, Asp89, and Asn109 together coordinate S-adenosyl-L-methionine.

It belongs to the class I-like SAM-binding methyltransferase superfamily. rRNA adenine N(6)-methyltransferase family. RsmA subfamily.

It localises to the cytoplasm. It catalyses the reaction adenosine(1518)/adenosine(1519) in 16S rRNA + 4 S-adenosyl-L-methionine = N(6)-dimethyladenosine(1518)/N(6)-dimethyladenosine(1519) in 16S rRNA + 4 S-adenosyl-L-homocysteine + 4 H(+). Functionally, specifically dimethylates two adjacent adenosines (A1518 and A1519) in the loop of a conserved hairpin near the 3'-end of 16S rRNA in the 30S particle. May play a critical role in biogenesis of 30S subunits. This chain is Ribosomal RNA small subunit methyltransferase A, found in Synechococcus sp. (strain CC9311).